The primary structure comprises 259 residues: Oxidase ustYb (259 aa).

The helical transmembrane segment at 36-56 threads the bilayer; the sequence is IIYTSLAFVGFIEILFFGIFF. Asn-102 and Asn-122 each carry an N-linked (GlcNAc...) asparagine glycan. 2 consecutive short sequence motifs (HXXHC) follow at residues 147-151 and 197-201; these read HQLHC and HVDHC.

It belongs to the ustYa family.

It is found in the membrane. Its pathway is mycotoxin biosynthesis. Its function is as follows. Oxidase; part of the gene cluster that mediates the biosynthesis of the secondary metabolite ustiloxin B, an antimitotic tetrapeptide. First, ustA is processed by the subtilisin-like endoprotease Kex2 that is outside the ustiloxin B gene cluster, at the C-terminal side of Arg-Lys, after transfer to Golgi apparatus through the endoplasmic reticulum (ER). Cleavage by KEX2 generates 16 peptides YAIG-I to YAIG-XVI. To process the precursor peptide further, at least two peptidases are necessary to cleave the N-terminal and C-terminal sides of the Tyr-Ala-Ile-Gly core peptide which serves as backbone for the synthesis of ustiloxin B, through cyclization and modification of the tyrosine with a non-protein coding amino acid, norvaline. One of the two peptidases must be the serine peptidase ustP; and the other pepdidase is probably ustH. Macrocyclization of the core peptide derived from ustA requires the tyrosinase ustQ, as well as the homologous oxidases ustYa and ustYb, and leads to the production of the first cyclization product N-desmethylustiloxin F. For the formation of N-desmethylustiloxin F, three oxidation steps are required, hydroxylation at the benzylic position, hydroxylation at either the aromatic ring of Tyr or beta-position of Ile, and oxidative cyclization. UstQ may catalyze the oxidation of a phenol moiety, whereas the ustYa and ustYb are most likely responsible for the remaining two-step oxidations. N-desmethylustiloxin F is then methylated by ustM to yield ustiloxin F which in turn substrate of the cytochrome P450 monooxygenase ustC which catalyzes the formation of S-deoxyustiloxin H. The flavoprotein monooxygenases ustF1 and ustF2 then participate in the modification of the side chain of S-deoxyustiloxin H, leading to the synthesis of an oxime intermediate, via ustiloxin H. Finally, carboxylative dehydration performed by the cysteine desulfurase-like protein ustD yields ustiloxin B. The polypeptide is Oxidase ustYb (Aspergillus flavus (strain ATCC 200026 / FGSC A1120 / IAM 13836 / NRRL 3357 / JCM 12722 / SRRC 167)).